Here is a 269-residue protein sequence, read N- to C-terminus: 3-methyl-2-oxobutanoate hydroxymethyltransferase (269 aa).

Positions 46 and 85 each coordinate Mg(2+). Residues 46 to 47, Asp85, and Lys114 each bind 3-methyl-2-oxobutanoate; that span reads DS. Glu116 provides a ligand contact to Mg(2+). Catalysis depends on Glu183, which acts as the Proton acceptor.

It belongs to the PanB family. In terms of assembly, homodecamer; pentamer of dimers. Requires Mg(2+) as cofactor.

Its subcellular location is the cytoplasm. It catalyses the reaction 3-methyl-2-oxobutanoate + (6R)-5,10-methylene-5,6,7,8-tetrahydrofolate + H2O = 2-dehydropantoate + (6S)-5,6,7,8-tetrahydrofolate. It functions in the pathway cofactor biosynthesis; (R)-pantothenate biosynthesis; (R)-pantoate from 3-methyl-2-oxobutanoate: step 1/2. Catalyzes the reversible reaction in which hydroxymethyl group from 5,10-methylenetetrahydrofolate is transferred onto alpha-ketoisovalerate to form ketopantoate. This chain is 3-methyl-2-oxobutanoate hydroxymethyltransferase, found in Methylococcus capsulatus (strain ATCC 33009 / NCIMB 11132 / Bath).